Here is a 369-residue protein sequence, read N- to C-terminus: UDP-3-O-acylglucosamine N-acyltransferase (369 aa).

His263 (proton acceptor) is an active-site residue.

Belongs to the transferase hexapeptide repeat family. LpxD subfamily. As to quaternary structure, homotrimer.

The enzyme catalyses a UDP-3-O-[(3R)-3-hydroxyacyl]-alpha-D-glucosamine + a (3R)-hydroxyacyl-[ACP] = a UDP-2-N,3-O-bis[(3R)-3-hydroxyacyl]-alpha-D-glucosamine + holo-[ACP] + H(+). It participates in bacterial outer membrane biogenesis; LPS lipid A biosynthesis. Its function is as follows. Catalyzes the N-acylation of UDP-3-O-acylglucosamine using 3-hydroxyacyl-ACP as the acyl donor. Is involved in the biosynthesis of lipid A, a phosphorylated glycolipid that anchors the lipopolysaccharide to the outer membrane of the cell. This is UDP-3-O-acylglucosamine N-acyltransferase from Burkholderia vietnamiensis (strain G4 / LMG 22486) (Burkholderia cepacia (strain R1808)).